The sequence spans 101 residues: Small ribosomal subunit protein uS14 (101 aa).

It belongs to the universal ribosomal protein uS14 family. As to quaternary structure, part of the 30S ribosomal subunit. Contacts proteins S3 and S10.

In terms of biological role, binds 16S rRNA, required for the assembly of 30S particles and may also be responsible for determining the conformation of the 16S rRNA at the A site. This chain is Small ribosomal subunit protein uS14, found in Marinobacter nauticus (strain ATCC 700491 / DSM 11845 / VT8) (Marinobacter aquaeolei).